We begin with the raw amino-acid sequence, 491 residues long: UDP-N-acetylmuramate--L-alanine ligase (491 aa).

126–132 is an ATP binding site; that stretch reads GTHGKTT.

This sequence belongs to the MurCDEF family.

The protein resides in the cytoplasm. The enzyme catalyses UDP-N-acetyl-alpha-D-muramate + L-alanine + ATP = UDP-N-acetyl-alpha-D-muramoyl-L-alanine + ADP + phosphate + H(+). The protein operates within cell wall biogenesis; peptidoglycan biosynthesis. Its function is as follows. Cell wall formation. This Salmonella agona (strain SL483) protein is UDP-N-acetylmuramate--L-alanine ligase.